A 292-amino-acid chain; its full sequence is Enoyl-CoA hydratase domain-containing protein 2, mitochondrial (292 aa).

The transit peptide at 1 to 35 directs the protein to the mitochondrion; sequence MLRVLCLLRPWRPLRARGCASDGAAGGSEIQVRAL. An N6-acetyllysine; alternate modification is found at Lys-97. Lys-97 is subject to N6-succinyllysine; alternate.

It belongs to the enoyl-CoA hydratase/isomerase family.

Its subcellular location is the mitochondrion. This chain is Enoyl-CoA hydratase domain-containing protein 2, mitochondrial (ECHDC2), found in Homo sapiens (Human).